The sequence spans 20 residues: Venom peptide Ocy8 (20 aa).

As to expression, expressed by the venom gland.

It localises to the secreted. The chain is Venom peptide Ocy8 from Opisthacanthus cayaporum (South American scorpion).